We begin with the raw amino-acid sequence, 209 residues long: MTRRLWDISPAVQAASPVFPGDTAYSQQWCATIGPGCPVNVSAITLSPHVGAHADAPLHYDADGASIGNVDLDAFLGPCRVIHAIGKGPLVEWEHIAHAVEHLPARVLVRTYGRAPTTWDQELAAYAPATVERLADLGVKLIGIDTASIDPASSKSLDSHQVIRRRGLRVLENLVLDEVAEGDYELIALPLKLVEADASPVRAVLRALA.

Phe-19 is a binding site for substrate. Zn(2+) is bound by residues His-49, His-53, and Asp-55. His-59 serves as the catalytic Proton donor/acceptor. The Zn(2+) site is built by His-160 and Glu-172.

The protein belongs to the Cyclase 1 superfamily. KynB family. Homodimer. The cofactor is Zn(2+).

It catalyses the reaction N-formyl-L-kynurenine + H2O = L-kynurenine + formate + H(+). It functions in the pathway amino-acid degradation; L-tryptophan degradation via kynurenine pathway; L-kynurenine from L-tryptophan: step 2/2. In terms of biological role, catalyzes the hydrolysis of N-formyl-L-kynurenine to L-kynurenine, the second step in the kynurenine pathway of tryptophan degradation. The chain is Kynurenine formamidase from Delftia acidovorans (strain DSM 14801 / SPH-1).